A 130-amino-acid chain; its full sequence is YopE regulator (130 aa).

Functionally, positive regulator of YopE. The polypeptide is YopE regulator (yerA) (Yersinia pestis).